The sequence spans 428 residues: GTPase Obg (428 aa).

Residues Met1–Leu158 enclose the Obg domain. The segment at Ala117–Gly143 is disordered. Positions Ala159–Glu329 constitute an OBG-type G domain. Residues Gly165–Ser172, Phe190–Val194, Asp212–Gly215, Asn282–Asp285, and Ser310–Val312 each bind GTP. 2 residues coordinate Mg(2+): Ser172 and Thr192. One can recognise an OCT domain in the interval Thr350–Asp428.

It belongs to the TRAFAC class OBG-HflX-like GTPase superfamily. OBG GTPase family. In terms of assembly, monomer. Interacts with TasA (AC P54507) in pull-down experiments. Mg(2+) is required as a cofactor.

The protein resides in the cytoplasm. Inhibited by GDP; less than 20 uM ppGpp stimulates the GTPase, while higher concentrations inhibit. Functionally, necessary for the transition from vegetative growth to stage 0 or stage II of sporulation, but sporulation subsequent to these stages is unaffected at 45 degrees Celsius. This ts effect is probably due solely to the E-79 mutation. Required for expression of early sporulation genes, further suggesting a role in the induction of sporulation. Depletion effects on sporulation can be partially suppressed by missense mutations in spo0A. Strains depleted for obg stop growing after about 3 hours and do not induce the sigma-B factor following ethanol stress. It cofractionates with the ribosome and upstream stress response regulators RsbR, RsbS and RsbT in size fractionation columns, suggesting the ribosome might serve as a possible mediator of the activity of obg and the stress induction of sigma-B. In glycerol gradients partially associates with ribosomes; this is stabilized by a nonhydrolyzable GTP-analog and to a lesser extent GTP and GDP. In terms of biological role, an essential GTPase which binds GTP, GDP and possibly (p)ppGpp with moderate affinity, with high nucleotide exchange rates and a fairly low GTP hydrolysis rate. Plays a role in control of the cell cycle, stress response, ribosome biogenesis and in those bacteria that undergo differentiation, in morphogenesis control. In Bacillus subtilis (strain 168), this protein is GTPase Obg.